A 467-amino-acid chain; its full sequence is Probable citrate synthase 1, mitochondrial (467 aa).

Active-site residues include His303, His349, and Asp404.

It belongs to the citrate synthase family. Homodimer.

Its subcellular location is the mitochondrion matrix. The enzyme catalyses oxaloacetate + acetyl-CoA + H2O = citrate + CoA + H(+). Its pathway is carbohydrate metabolism; tricarboxylic acid cycle; isocitrate from oxaloacetate: step 1/2. This chain is Probable citrate synthase 1, mitochondrial, found in Aedes aegypti (Yellowfever mosquito).